The following is a 254-amino-acid chain: Phosphoribosylaminoimidazole-succinocarboxamide synthase (254 aa).

This sequence belongs to the SAICAR synthetase family.

The enzyme catalyses 5-amino-1-(5-phospho-D-ribosyl)imidazole-4-carboxylate + L-aspartate + ATP = (2S)-2-[5-amino-1-(5-phospho-beta-D-ribosyl)imidazole-4-carboxamido]succinate + ADP + phosphate + 2 H(+). It functions in the pathway purine metabolism; IMP biosynthesis via de novo pathway; 5-amino-1-(5-phospho-D-ribosyl)imidazole-4-carboxamide from 5-amino-1-(5-phospho-D-ribosyl)imidazole-4-carboxylate: step 1/2. This Brucella abortus (strain S19) protein is Phosphoribosylaminoimidazole-succinocarboxamide synthase.